Here is a 302-residue protein sequence, read N- to C-terminus: Melibiose operon regulatory protein (302 aa).

The HTH araC/xylS-type domain maps to 194–292 (SQMLGFIAEN…GMSPQQYRKL (99 aa)). 2 consecutive DNA-binding regions (H-T-H motif) follow at residues 211–232 (NDVAEHVKLNANYAMGIFQRVM) and 259–282 (ILDIALTAGFRSSSRFYSTFGKYV).

Functionally, transcription activator for the expression of the melAB operon. MelR binds at two sites located upstream of the melAB transcription site. The protein is Melibiose operon regulatory protein (melR) of Escherichia coli O6:H1 (strain CFT073 / ATCC 700928 / UPEC).